The following is a 159-amino-acid chain: Large ribosomal subunit protein uL11 (159 aa).

The protein belongs to the universal ribosomal protein uL11 family. In terms of assembly, part of the ribosomal stalk of the 50S ribosomal subunit. Interacts with L10 and the large rRNA to form the base of the stalk. L10 forms an elongated spine to which L12 dimers bind in a sequential fashion forming a multimeric L10(L12)X complex.

In terms of biological role, forms part of the ribosomal stalk which helps the ribosome interact with GTP-bound translation factors. The sequence is that of Large ribosomal subunit protein uL11 from Methanococcus maripaludis (strain DSM 14266 / JCM 13030 / NBRC 101832 / S2 / LL).